We begin with the raw amino-acid sequence, 102 residues long: MNGQNIRIRLKAFDHRILDSSTREIVNTAKRTGAQVRGPIPLPTRIEKFTVNRSPHVDKKSREQFEMRTHKRLLDIVDPTPQTVDALMKLDLAAGVDVEIKL.

It belongs to the universal ribosomal protein uS10 family. As to quaternary structure, part of the 30S ribosomal subunit.

Its function is as follows. Involved in the binding of tRNA to the ribosomes. The sequence is that of Small ribosomal subunit protein uS10 from Rhodopseudomonas palustris (strain BisB18).